The primary structure comprises 69 residues: Pleurain-A4 (69 aa).

A signal peptide spans 1–22 (MFTLKKTLLLLFFLGTISISLC). Residues 23 to 43 (KQERDADEDDGRKMTEEEVKR) constitute a propeptide that is removed on maturation. Cysteine 63 and cysteine 69 form a disulfide bridge.

The protein belongs to the frog skin active peptide (FSAP) family. Pleurain subfamily. Expressed by the skin glands.

The protein resides in the secreted. In terms of biological role, antimicrobial peptide. Has activity against Gram-positive and -negative bacteria, and fungi. Has little hemolytic activity on red blood cells. In Nidirana pleuraden (Yunnan pond frog), this protein is Pleurain-A4.